Consider the following 432-residue polypeptide: Muscle cell intermediate filament protein OV71 (432 aa).

Positions 1–111 (KLIDELEEYK…RVHDQEISEL (111 aa)) are coil 1B. The IF rod domain occupies 1-277 (KLIDELEEYK…KMLEGEENRA (277 aa)). The tract at residues 112–128 (QAMAARDTTSENREYFK) is linker 12. A coil 2 region spans residues 129 to 277 (NELSSAIRDI…KMLEGEENRA (149 aa)). The tract at residues 278–432 (GLRQLVEQVV…HIQRSSHTIS (155 aa)) is tail. The LTD domain maps to 310–427 (SRTSFQRSAK…EERASHIQRS (118 aa)).

The protein belongs to the intermediate filament family.

This is Muscle cell intermediate filament protein OV71 (OV71) from Onchocerca volvulus.